The primary structure comprises 1100 residues: MRKDERERDAPAMRSPPPPPASAASPPESLRNGYVKSCVSPLRQDPPRSFFFHLCRFCNVEPPAASLRAGARLSLGVLAAFVLAALLGARPERWAAAAAGLRTLLSACSLSLSPLFSIACAFFFLTCFLTRAQRGPGRGAGSWWLLALPACCYLGDFAAWQWWSWLRGEPAAAGRLCLVLSCVGLLTLAPRVRLRHGVLVLLFAGLVWWVSFSGLGALPPALRPLLSCLVGGAGCLLALGLDHFFHVRGASPPPRSASTAEEKVPVIRPRRRSSCVSLGESAAGYYGSGKMFRRPSLPCISREQMILWDWDLKQWCKPHYQNSGGGNGVDLSVLNEARNMVSDLLIDPSLPPQVISSLRSISSLMGAFSGSCRPKINSFTPFPGFYPCSEVEDPVEKGDRKLHKGLSGRTSFPTPQLRRSSGASSLLTNEHCSRWDRSSGKRSYQELSVSSHGCHLNGPFSSNLFTIPKQRSSSVSLTHHAGLRRAGALPSHSLLNSSSHVPVSAGSLTNRSPIGFPDTTDFLTKPNIILHRSLGSVSSAADFHQYLRNSDSNLCSSCGHQILKYVSTCEPDGTDHPSEKSGEEDSSVFSKEPLNIVETQEEETMKKACRELFLEGDSHLMEEAQQPNIDQEVSLDPMLVEDYDSLIEKMNNWNFQIFELVEKMGEKSGRILSQVMYTLFQDTGLLETFKIPTQEFMNYFRALENGYRDIPYHNRVHATDVLHAVWYLTTRPIPGLPQIHNNHETETKADSDGRLGSGQIAYISSKSCCIPDMSYGCLSSNIPALELMALYVAAAMHDYDHPGRTNAFLVATNAPQAVLYNDRSVLENHHAASAWNLYLSRPEYNFLLNLDHMEFKRFRFLVIEAILATDLKKHFDFLAEFNAKANDVNSNGIEWSSENDRLLVCQVCIKLADINGPAKDRDLHLRWTEGIVNEFYEQGDEEAALGLPISPFMDRSSPQLAKLQESFITHIVGPLCNSYDAAGLLPGQWIETEEGDDTESDDDDDDDDGDGGEELDSDDEETEDNLNPKPQRRKGRRRIFCQLMHHLTENHKIWKEIIEEEEEKCKAEGNKLQVDNASLPQADEIQVIEEADEEEEQMFE.

The segment covering 1–11 has biased composition (basic and acidic residues); the sequence is MRKDERERDAP. Residues 1-28 form an interaction with RAPGEF3 region; it reads MRKDERERDAPAMRSPPPPPASAASPPE. The segment at 1–29 is disordered; it reads MRKDERERDAPAMRSPPPPPASAASPPES. Position 15 is a phosphoserine (Ser15). 6 consecutive transmembrane segments (helical) span residues 69–89, 110–130, 140–160, 170–190, 198–218, and 225–245; these read AGARLSLGVLAAFVLAALLGA, LSLSPLFSIACAFFFLTCFLT, AGSWWLLALPACCYLGDFAAW, PAAAGRLCLVLSCVGLLTLAP, VLVLLFAGLVWWVSFSGLGAL, and LLSCLVGGAGCLLALGLDHFF. A Phosphoserine; by PKB/AKT1 or PKB/AKT2 modification is found at Ser273. Residues Ser274 and Ser421 each carry the phosphoserine modification. Disordered regions lie at residues 400–423 and 570–590; these read RKLHKGLSGRTSFPTPQLRRSSGA and EPDGTDHPSEKSGEEDSSVFS. Residues 408-423 show a composition bias toward polar residues; the sequence is GRTSFPTPQLRRSSGA. The segment at 415–439 is interaction with PIK3R6; it reads PQLRRSSGASSLLTNEHCSRWDRSS. Positions 573–583 are enriched in basic and acidic residues; that stretch reads GTDHPSEKSGE. The region spanning 627–1061 is the PDEase domain; it reads PNIDQEVSLD…KIWKEIIEEE (435 aa). His713 acts as the Proton donor in catalysis. His713 is a binding site for AMP. Mg(2+) contacts are provided by His717, His797, Asp798, and Asp913. Positions 798, 913, and 964 each coordinate AMP. A compositionally biased stretch (acidic residues) spans 993–1024; it reads EEGDDTESDDDDDDDDGDGGEELDSDDEETED. The interval 993 to 1033 is disordered; that stretch reads EEGDDTESDDDDDDDDGDGGEELDSDDEETEDNLNPKPQRR. Residues 1044–1079 are a coiled coil; it reads MHHLTENHKIWKEIIEEEEEKCKAEGNKLQVDNASL.

Belongs to the cyclic nucleotide phosphodiesterase family. PDE3 subfamily. Homodimer. Interacts with PIK3CG; regulates PDE3B activity and thereby cAMP levels in cells. Interacts with RAPGEF3 and PIK3R6; form a signaling complex that regulates phosphatidylinositol 3-kinase gamma in angiogenesis. Interacts with ABHD15; this interaction regulates PDE3B's stability and expression and, thereby, impacts the antilipolytic action of insulin. Requires Mg(2+) as cofactor. The cofactor is Mn(2+). Post-translationally, phosphorylation at Ser-273 mediates insulin-induced activation of PDE3B. Abundant in adipose tissues.

It is found in the membrane. The catalysed reaction is a nucleoside 3',5'-cyclic phosphate + H2O = a nucleoside 5'-phosphate + H(+). It carries out the reaction 3',5'-cyclic AMP + H2O = AMP + H(+). The enzyme catalyses 3',5'-cyclic GMP + H2O = GMP + H(+). Inhibited by cGMP. In terms of biological role, cyclic nucleotide phosphodiesterase with a dual-specificity for the second messengers cAMP and cGMP, which are key regulators of many important physiological processes. Regulates angiogenesis by inhibiting the cAMP-dependent guanine nucleotide exchange factor RAPGEF3 and downstream phosphatidylinositol 3-kinase gamma-mediated signaling. Controls cardiac contractility by reducing cAMP concentration in cardiocytes. In Mus musculus (Mouse), this protein is cGMP-inhibited 3',5'-cyclic phosphodiesterase 3B.